Consider the following 140-residue polypeptide: Large ribosomal subunit protein bL17 (140 aa).

This sequence belongs to the bacterial ribosomal protein bL17 family. As to quaternary structure, part of the 50S ribosomal subunit. Contacts protein L32.

The polypeptide is Large ribosomal subunit protein bL17 (Rhizobium etli (strain CIAT 652)).